We begin with the raw amino-acid sequence, 316 residues long: uncharacterized protein (316 aa).

Disordered regions lie at residues Ala82 to Asn105 and Ala238 to Glu257. Low complexity-rich tracts occupy residues Ala84–Thr96 and Ser239–Thr255.

This sequence belongs to the MG307/MG309/MG338 family.

This is an uncharacterized protein from Mycoplasma pneumoniae (strain ATCC 29342 / M129 / Subtype 1) (Mycoplasmoides pneumoniae).